Reading from the N-terminus, the 297-residue chain is Homoserine kinase (297 aa).

82–92 (PVSRGLGSSAA) is an ATP binding site.

It belongs to the GHMP kinase family. Homoserine kinase subfamily.

The protein resides in the cytoplasm. It catalyses the reaction L-homoserine + ATP = O-phospho-L-homoserine + ADP + H(+). The protein operates within amino-acid biosynthesis; L-threonine biosynthesis; L-threonine from L-aspartate: step 4/5. Functionally, catalyzes the ATP-dependent phosphorylation of L-homoserine to L-homoserine phosphate. This is Homoserine kinase from Clostridium botulinum (strain 657 / Type Ba4).